A 371-amino-acid chain; its full sequence is Glycosyltransferase 8 domain-containing protein 1 (371 aa).

The Cytoplasmic segment spans residues 1–7; it reads MSFRKVH. The helical; Signal-anchor for type II membrane protein transmembrane segment at 8–28 threads the bilayer; that stretch reads IAIILLAAVVFLLILHHNILG. Topologically, residues 29–371 are lumenal; it reads LTDILTRQSS…RRHGEADGTK (343 aa). N-linked (GlcNAc...) asparagine glycans are attached at residues Asn104, Asn249, and Asn257.

The protein belongs to the glycosyltransferase 8 family.

It localises to the membrane. The protein is Glycosyltransferase 8 domain-containing protein 1 (glt8d1) of Xenopus tropicalis (Western clawed frog).